The primary structure comprises 463 residues: Argininosuccinate lyase (463 aa).

Belongs to the lyase 1 family. Argininosuccinate lyase subfamily.

Its subcellular location is the cytoplasm. The catalysed reaction is 2-(N(omega)-L-arginino)succinate = fumarate + L-arginine. It functions in the pathway amino-acid biosynthesis; L-arginine biosynthesis; L-arginine from L-ornithine and carbamoyl phosphate: step 3/3. In Prochlorococcus marinus (strain NATL1A), this protein is Argininosuccinate lyase.